A 300-amino-acid polypeptide reads, in one-letter code: Formamidopyrimidine-DNA glycosylase (300 aa).

Pro-2 (schiff-base intermediate with DNA) is an active-site residue. The Proton donor role is filled by Glu-3. Residue Lys-60 is the Proton donor; for beta-elimination activity of the active site. Residues His-108, Arg-136, and Arg-181 each coordinate DNA. Residues 266–300 (WVYSRAGQPCRICNTPLEKIKLAGRSTHFCPQCQK) form an FPG-type zinc finger. Arg-290 acts as the Proton donor; for delta-elimination activity in catalysis.

The protein belongs to the FPG family. Monomer. Zn(2+) is required as a cofactor.

The catalysed reaction is Hydrolysis of DNA containing ring-opened 7-methylguanine residues, releasing 2,6-diamino-4-hydroxy-5-(N-methyl)formamidopyrimidine.. The enzyme catalyses 2'-deoxyribonucleotide-(2'-deoxyribose 5'-phosphate)-2'-deoxyribonucleotide-DNA = a 3'-end 2'-deoxyribonucleotide-(2,3-dehydro-2,3-deoxyribose 5'-phosphate)-DNA + a 5'-end 5'-phospho-2'-deoxyribonucleoside-DNA + H(+). Its function is as follows. Involved in base excision repair of DNA damaged by oxidation or by mutagenic agents. Acts as a DNA glycosylase that recognizes and removes damaged bases. Has a preference for oxidized purines, such as 7,8-dihydro-8-oxoguanine (8-oxoG). Has AP (apurinic/apyrimidinic) lyase activity and introduces nicks in the DNA strand. Cleaves the DNA backbone by beta-delta elimination to generate a single-strand break at the site of the removed base with both 3'- and 5'-phosphates. In Trichodesmium erythraeum (strain IMS101), this protein is Formamidopyrimidine-DNA glycosylase.